The primary structure comprises 113 residues: Photosystem II reaction center Psb28 protein (113 aa).

The protein belongs to the Psb28 family. As to quaternary structure, part of the photosystem II complex.

It is found in the cellular thylakoid membrane. This chain is Photosystem II reaction center Psb28 protein, found in Trichodesmium erythraeum (strain IMS101).